A 148-amino-acid polypeptide reads, in one-letter code: U2 snRNP component IST3 (148 aa).

The 79-residue stretch at 31–109 (AYIYIGNLNR…RALKIDHTFY (79 aa)) folds into the RRM domain.

This sequence belongs to the IST3 family. In terms of assembly, component of the 45S U1.U2.U4/U6.U5 penta-snRNP particle, a subcomplex of the spliceosome. Belongs to the CWC complex (or CEF1-associated complex), a spliceosome sub-complex reminiscent of a late-stage spliceosome composed of the U2, U5 and U6 snRNAs and at least BUD13, BUD31, BRR2, CDC40, CEF1, CLF1, CUS1, CWC2, CWC15, CWC21, CWC22, CWC23, CWC24, CWC25, CWC27, ECM2, HSH155, IST3, ISY1, LEA1, MSL1, NTC20, PRP8, PRP9, PRP11, PRP19, PRP21, PRP22, PRP45, PRP46, SLU7, SMB1, SMD1, SMD2, SMD3, SMX2, SMX3, SNT309, SNU114, SPP2, SYF1, SYF2, RSE1 and YJU2. Belongs to the pre-mRNA retention and splicing (RES) complex composed of at least BUD13, IST3 and PML1. Subunit of the U2 snRNP. Interacts with RDS3.

The protein resides in the cytoplasm. It localises to the nucleus. Its function is as follows. Required for pre-mRNA splicing and spliceosome assembly. As part of the pre-mRNA retention and splicing (RES) complex, required for nuclear pre-mRNA retention and efficient splicing. Required for MER1-activated splicing. In Saccharomyces cerevisiae (strain ATCC 204508 / S288c) (Baker's yeast), this protein is U2 snRNP component IST3 (IST3).